A 207-amino-acid chain; its full sequence is Early nodulin-like protein 11 (207 aa).

Residues 1-24 (MVSLISIVSVVFLLFTTFYHFGEA) form the signal peptide. A Phytocyanin domain is found at 25-130 (RIINVGGSLD…GEKVTVVVQS (106 aa)). N-linked (GlcNAc...) asparagine glycosylation is present at asparagine 43. Cysteines 83 and 118 form a disulfide. The segment at 129 to 179 (QSPNHPKPGPAAVTPTLPPKPSTTPAAPAPAPPTPSPKSSTSTMAPAPAPA) is disordered. Pro residues predominate over residues 144 to 164 (TLPPKPSTTPAAPAPAPPTPS). The segment covering 165–179 (PKSSTSTMAPAPAPA) has biased composition (low complexity). Residue serine 181 is the site of GPI-anchor amidated serine attachment. Positions 182 to 207 (SAVGLVAGNGIFWASTLVAVIGLAFA) are cleaved as a propeptide — removed in mature form.

The protein belongs to the early nodulin-like (ENODL) family. Confined to flowers and siliques.

The protein localises to the cell membrane. May act as a carbohydrate transporter. Required, together with ENODL11, ENODL12, ENODL13, ENODL14 and ENODL15, for male-female communication and pollen tube reception and burst at the synergid cell surface of the female gametophyte. This chain is Early nodulin-like protein 11, found in Arabidopsis thaliana (Mouse-ear cress).